We begin with the raw amino-acid sequence, 592 residues long: Inactive heparanase-2 (592 aa).

The N-terminal stretch at 1–41 (MRVLCAFPEAMPSSNSRPPACLAPGALYLALLLHLSLSSQA) is a signal peptide. Residues Asn-254 and Asn-392 are each glycosylated (N-linked (GlcNAc...) asparagine).

It belongs to the glycosyl hydrolase 79 family. In terms of assembly, interacts with HPSE. Interacts with SDC1 (via glycan chains). In terms of tissue distribution, widely expressed, with the highest expression in brain, mammary gland, prostate, small intestine, testis and uterus. In the central nervous system, expressed in the spinal cord, caudate nucleus, thalamus, substantia nigra, medulla oblongata, putamen and pons. In the urinary bladder, expressed in longitudinal and circular layers of detrusor muscle. Found both in normal and cancer tissues.

It localises to the secreted. The protein resides in the extracellular space. It is found in the extracellular matrix. Functionally, binds heparin and heparan sulfate with high affinity, but lacks heparanase activity. Inhibits HPSE, possibly by competing for its substrates (in vitro). This chain is Inactive heparanase-2 (HPSE2), found in Homo sapiens (Human).